The sequence spans 295 residues: Elongation factor Ts (295 aa).

Positions 79–82 (TDFV) are involved in Mg(2+) ion dislocation from EF-Tu.

Belongs to the EF-Ts family.

The protein resides in the cytoplasm. In terms of biological role, associates with the EF-Tu.GDP complex and induces the exchange of GDP to GTP. It remains bound to the aminoacyl-tRNA.EF-Tu.GTP complex up to the GTP hydrolysis stage on the ribosome. The polypeptide is Elongation factor Ts (Bacillus cytotoxicus (strain DSM 22905 / CIP 110041 / 391-98 / NVH 391-98)).